The chain runs to 73 residues: Translation initiation factor IF-1 3 (73 aa).

Positions 1–72 (MAKEELVEFG…TKGRINYRHK (72 aa)) constitute an S1-like domain.

Belongs to the IF-1 family. Component of the 30S ribosomal translation pre-initiation complex which assembles on the 30S ribosome in the order IF-2 and IF-3, IF-1 and N-formylmethionyl-tRNA(fMet); mRNA recruitment can occur at any time during PIC assembly.

The protein localises to the cytoplasm. Its function is as follows. One of the essential components for the initiation of protein synthesis. Stabilizes the binding of IF-2 and IF-3 on the 30S subunit to which N-formylmethionyl-tRNA(fMet) subsequently binds. Helps modulate mRNA selection, yielding the 30S pre-initiation complex (PIC). Upon addition of the 50S ribosomal subunit IF-1, IF-2 and IF-3 are released leaving the mature 70S translation initiation complex. The sequence is that of Translation initiation factor IF-1 3 from Cupriavidus pinatubonensis (strain JMP 134 / LMG 1197) (Cupriavidus necator (strain JMP 134)).